A 529-amino-acid polypeptide reads, in one-letter code: Heat shock protein 60 (529 aa).

Residues 460–484 (YQATVQHPPPQSSYEEDGRRPPTQP) form a disordered region.

In Giardia intestinalis (Giardia lamblia), this protein is Heat shock protein 60.